Reading from the N-terminus, the 673-residue chain is Armadillo repeat-containing protein 8 (673 aa).

14 ARM repeats span residues 51–92, 95–134, 138–176, 178–217, 225–265, 269–309, 313–352, 374–413, 416–455, 458–497, 501–540, 543–585, 588–627, and 634–673; these read NKQK…SLSM, ENNI…TVFI, TPVQ…HCCK, PEHQ…VLAY, TLVN…YMCR, IRTE…YLME, ELQR…HDLK, DIRK…SLSR, QQLR…NLLL, SPSK…NMAF, QKVK…NLLS, PHID…NIAD, TAKE…NLIW, and QERQ…QYLA.

Identified in the CTLH complex that contains at least MAEA, RMND5A (or alternatively its paralog RMND5B), GID8, WDR26, and RANBP9 and/or RANBP10; ARMC8 has an ancillary role in the complex.

It localises to the nucleus. Its subcellular location is the cytoplasm. Its function is as follows. Component of the CTLH E3 ubiquitin-protein ligase complex that mediates ubiquitination and subsequent proteasomal degradation of target proteins. In Danio rerio (Zebrafish), this protein is Armadillo repeat-containing protein 8 (armc8).